The sequence spans 385 residues: Deoxyhypusine synthase (385 aa).

NAD(+) contacts are provided by residues 108–112, 134–136, glutamate 140, and aspartate 257; these read SNLIS and TAG. 139 to 140 lines the spermidine pocket; the sequence is EE. Aspartate 262 contacts spermidine. Glycine 304 is an NAD(+) binding site. Histidine 309 contributes to the spermidine binding site. Position 329-330 (329-330) interacts with NAD(+); sequence TG. Residues 335–337 and 344–350 contribute to the spermidine site; these read GSD and EAVSWGK. The active-site Nucleophile is the lysine 350. Position 363-364 (363-364) interacts with NAD(+); that stretch reads DV.

This sequence belongs to the deoxyhypusine synthase family. NAD(+) serves as cofactor.

The enzyme catalyses [eIF5A protein]-L-lysine + spermidine = [eIF5A protein]-deoxyhypusine + propane-1,3-diamine. It participates in protein modification; eIF5A hypusination. In terms of biological role, catalyzes the NAD-dependent oxidative cleavage of spermidine and the subsequent transfer of the butylamine moiety of spermidine to the epsilon-amino group of a specific lysine residue of the eIF-5A precursor protein to form the intermediate deoxyhypusine residue. The protein is Deoxyhypusine synthase (DYS1) of Candida glabrata (strain ATCC 2001 / BCRC 20586 / JCM 3761 / NBRC 0622 / NRRL Y-65 / CBS 138) (Yeast).